Consider the following 385-residue polypeptide: T-box transcription factor TBX10 (385 aa).

The segment at 22-61 (TTSSGWEPRLGSPFPSGPCTSSTGAQAVAEPTGQGPKNPR) is disordered. A DNA-binding region (T-box) is located at residues 69 to 252 (LEMKPLWEEF…SNPFAKGFRE (184 aa)).

The protein resides in the nucleus. Its function is as follows. Probable transcriptional regulator involved in developmental processes. This chain is T-box transcription factor TBX10 (TBX10), found in Homo sapiens (Human).